Consider the following 92-residue polypeptide: MTVTNTPTPTFDQLTRYIRVRSEPEAKFVEFDFAIGHPELFVELVLPQDAFVKFCQHNRVVAMDEAMAKAVDDDMVKWRFGDVGRRLPKDPG.

In terms of assembly, homotrimer or homotetramer. Interacts with the phenol hydroxylase components DmpL (P1 component) and DmpN (P3 component).

It functions in the pathway aromatic compound metabolism; phenol degradation. Its function is as follows. DmpK is an auxiliary protein associated with the multicomponent phenol hydroxylase DmpLMNOP and it may be involved in the post-translational incorporation of iron into the oxygenase component of the phenol hydroxylase. Required for growth on phenol but not for in vitro phenol hydroxylase activity. The protein is Phenol 2-monooxygenase, auxiliary component DmpK of Pseudomonas sp. (strain CF600).